The chain runs to 95 residues: Glutaredoxin 1 (95 aa).

A Glutaredoxin domain is found at 1-95 (MNKSILHTII…DKLLEHQPKN (95 aa)). Cysteines 17 and 20 form a disulfide.

The protein belongs to the glutaredoxin family. Monomer.

The protein localises to the cytoplasm. Has a glutathione-disulfide oxidoreductase activity in the presence of NADPH and glutathione reductase. Reduces low molecular weight disulfides and proteins. The sequence is that of Glutaredoxin 1 (grxC1) from Rickettsia prowazekii (strain Madrid E).